The sequence spans 658 residues: Translation factor GUF1, mitochondrial (658 aa).

A mitochondrion-targeting transit peptide spans 1 to 40 (MRGCLQTVRWLTSAWQRPRSYSPLSRAAPCRFFNVSIPRN). Positions 60–240 (DRFRNFCIVA…TVVEQIPAPV (181 aa)) constitute a tr-type G domain. GTP-binding positions include 69 to 76 (AHVDHGKS), 133 to 137 (DTPGH), and 187 to 190 (NKVD).

The protein belongs to the TRAFAC class translation factor GTPase superfamily. Classic translation factor GTPase family. LepA subfamily.

It is found in the mitochondrion inner membrane. It carries out the reaction GTP + H2O = GDP + phosphate + H(+). Its function is as follows. Promotes mitochondrial protein synthesis. May act as a fidelity factor of the translation reaction, by catalyzing a one-codon backward translocation of tRNAs on improperly translocated ribosomes. Binds to mitochondrial ribosomes in a GTP-dependent manner. This Paracoccidioides lutzii (strain ATCC MYA-826 / Pb01) (Paracoccidioides brasiliensis) protein is Translation factor GUF1, mitochondrial.